Reading from the N-terminus, the 260-residue chain is Probable carbohydrate esterase At4g34215 (260 aa).

Residues 1–22 (MEGGSITPGEDKPEIQSPIPPN) form a disordered region. Active-site residues include Ser-31, Asp-235, and His-238.

This sequence belongs to the carbohydrate esterase 6 family.

The sequence is that of Probable carbohydrate esterase At4g34215 from Arabidopsis thaliana (Mouse-ear cress).